We begin with the raw amino-acid sequence, 207 residues long: Small ribosomal subunit protein uS4 (207 aa).

Residues 97 to 160 (SRLDNVVYRM…KKQARIVEAL (64 aa)) form the S4 RNA-binding domain.

Belongs to the universal ribosomal protein uS4 family. Part of the 30S ribosomal subunit. Contacts protein S5. The interaction surface between S4 and S5 is involved in control of translational fidelity.

Functionally, one of the primary rRNA binding proteins, it binds directly to 16S rRNA where it nucleates assembly of the body of the 30S subunit. With S5 and S12 plays an important role in translational accuracy. The protein is Small ribosomal subunit protein uS4 of Burkholderia pseudomallei (strain 1106a).